Here is a 67-residue protein sequence, read N- to C-terminus: Sec-independent protein translocase protein TatA (67 aa).

A helical transmembrane segment spans residues 1–21 (MFGLGGQELVLILLIVLLLFG).

It belongs to the TatA/E family. Forms a complex with TatC.

Its subcellular location is the cell inner membrane. In terms of biological role, part of the twin-arginine translocation (Tat) system that transports large folded proteins containing a characteristic twin-arginine motif in their signal peptide across membranes. TatA could form the protein-conducting channel of the Tat system. The polypeptide is Sec-independent protein translocase protein TatA (Chlorobaculum tepidum (strain ATCC 49652 / DSM 12025 / NBRC 103806 / TLS) (Chlorobium tepidum)).